The following is a 131-amino-acid chain: Con-Ins Q1b (131 aa).

A signal peptide spans 1 to 24 (MTTSSYFLLVALGLLLYLCQSSFG). 4 disulfide bridges follow: Cys29–Cys107, Cys41–Cys110, Cys53–Cys123, and Cys109–Cys114. Positions 59–92 (LQGGTDDARKKRGRASLLRKRRGFLSMLKARAKR) are cleaved as a propeptide — c peptide. Glu118 carries the post-translational modification 4-carboxyglutamate; partial. Ser130 is subject to Serine amide.

Belongs to the insulin family. Heterodimer of A and B chains; disulfide-linked. As to expression, expressed by the venom gland.

The protein resides in the secreted. In terms of biological role, this venom insulin facilitates prey capture by rapidly inducing hypoglycemic shock. Intraperitoneal injection of this peptide into zebrafish lowers blood glucose with the same potency than human insulin. In vivo, when applied to water, this peptide reduces overall locomotor activity of zebrafish larvae, observed as a significant decrease in the percentage of time spent swimming and movement frequency. In Conus quercinus (Oak cone), this protein is Con-Ins Q1b.